We begin with the raw amino-acid sequence, 273 residues long: Large ribosomal subunit protein uL2 (273 aa).

Disordered stretches follow at residues 32–53 (PLVEKNSKSGGRNNNGRITTRH) and 221–273 (RGTA…RRSK). Over residues 39 to 48 (KSGGRNNNGR) the composition is skewed to low complexity.

The protein belongs to the universal ribosomal protein uL2 family. In terms of assembly, part of the 50S ribosomal subunit. Forms a bridge to the 30S subunit in the 70S ribosome.

In terms of biological role, one of the primary rRNA binding proteins. Required for association of the 30S and 50S subunits to form the 70S ribosome, for tRNA binding and peptide bond formation. It has been suggested to have peptidyltransferase activity; this is somewhat controversial. Makes several contacts with the 16S rRNA in the 70S ribosome. The protein is Large ribosomal subunit protein uL2 of Erwinia tasmaniensis (strain DSM 17950 / CFBP 7177 / CIP 109463 / NCPPB 4357 / Et1/99).